Here is a 922-residue protein sequence, read N- to C-terminus: Isoleucine--tRNA ligase (922 aa).

The 'HIGH' region signature appears at 57–67 (PYANGDIHLGH). Residue Glu553 participates in L-isoleucyl-5'-AMP binding. The short motif at 594–598 (KMSKS) is the 'KMSKS' region element. Residue Lys597 participates in ATP binding. Residues Cys892, Cys895, Cys912, and Cys915 each coordinate Zn(2+).

It belongs to the class-I aminoacyl-tRNA synthetase family. IleS type 1 subfamily. In terms of assembly, monomer. Zn(2+) serves as cofactor.

The protein resides in the cytoplasm. The enzyme catalyses tRNA(Ile) + L-isoleucine + ATP = L-isoleucyl-tRNA(Ile) + AMP + diphosphate. Its function is as follows. Catalyzes the attachment of isoleucine to tRNA(Ile). As IleRS can inadvertently accommodate and process structurally similar amino acids such as valine, to avoid such errors it has two additional distinct tRNA(Ile)-dependent editing activities. One activity is designated as 'pretransfer' editing and involves the hydrolysis of activated Val-AMP. The other activity is designated 'posttransfer' editing and involves deacylation of mischarged Val-tRNA(Ile). The sequence is that of Isoleucine--tRNA ligase from Desulfitobacterium hafniense (strain Y51).